The primary structure comprises 453 residues: Trigger factor (453 aa).

One can recognise a PPIase FKBP-type domain in the interval 171 to 256 (GDRVTVSFKG…ATLVEAPKDT (86 aa)).

It belongs to the FKBP-type PPIase family. Tig subfamily.

The protein resides in the cytoplasm. It carries out the reaction [protein]-peptidylproline (omega=180) = [protein]-peptidylproline (omega=0). In terms of biological role, involved in protein export. Acts as a chaperone by maintaining the newly synthesized protein in an open conformation. Functions as a peptidyl-prolyl cis-trans isomerase. The chain is Trigger factor from Rhodopseudomonas palustris (strain BisA53).